The chain runs to 242 residues: Biosynthetic peptidoglycan transglycosylase (242 aa).

Residues 19–39 (LMVVLAVFWGGGIALFSVAPV) traverse the membrane as a helical segment.

This sequence belongs to the glycosyltransferase 51 family.

The protein resides in the cell inner membrane. The catalysed reaction is [GlcNAc-(1-&gt;4)-Mur2Ac(oyl-L-Ala-gamma-D-Glu-L-Lys-D-Ala-D-Ala)](n)-di-trans,octa-cis-undecaprenyl diphosphate + beta-D-GlcNAc-(1-&gt;4)-Mur2Ac(oyl-L-Ala-gamma-D-Glu-L-Lys-D-Ala-D-Ala)-di-trans,octa-cis-undecaprenyl diphosphate = [GlcNAc-(1-&gt;4)-Mur2Ac(oyl-L-Ala-gamma-D-Glu-L-Lys-D-Ala-D-Ala)](n+1)-di-trans,octa-cis-undecaprenyl diphosphate + di-trans,octa-cis-undecaprenyl diphosphate + H(+). Its pathway is cell wall biogenesis; peptidoglycan biosynthesis. Peptidoglycan polymerase that catalyzes glycan chain elongation from lipid-linked precursors. The sequence is that of Biosynthetic peptidoglycan transglycosylase from Escherichia coli (strain 55989 / EAEC).